The chain runs to 375 residues: Growth/differentiation factor 8 (375 aa).

An N-terminal signal peptide occupies residues 1-18; it reads MQKLQIFVYIYLFMLLVA. Positions 19–266 are excised as a propeptide; that stretch reads GPVDLNENSE…VTDTPKRSRR (248 aa). N-linked (GlcNAc...) asparagine glycosylation is found at Asn48 and Asn71. Cystine bridges form between Cys272-Cys282, Cys281-Cys340, Cys309-Cys372, and Cys313-Cys374.

It belongs to the TGF-beta family. In terms of assembly, homodimer; disulfide-linked. Interacts with WFIKKN2, leading to inhibit its activity. Interacts with FSTL3. Synthesized as large precursor molecule that undergoes proteolytic cleavage to generate an N-terminal propeptide and a disulfide linked C-terminal dimer, which is the biologically active molecule. The circulating form consists of a latent complex of the C-terminal dimer and other proteins, including its propeptide, which maintain the C-terminal dimer in a latent, inactive state. Ligand activation requires additional cleavage of the prodomain by a tolloid-like metalloproteinase.

Its subcellular location is the secreted. Functionally, acts specifically as a negative regulator of skeletal muscle growth. This Capra ibex (Ibex) protein is Growth/differentiation factor 8 (MSTN).